Consider the following 637-residue polypeptide: ATP-dependent zinc metalloprotease FtsH (637 aa).

Topologically, residues 1–6 (MNNQGR) are cytoplasmic. The helical transmembrane segment at 7 to 27 (SILAWAALFIFVILLFNVFQS) threads the bilayer. Over 28 to 103 (DGLLGVRNNI…VVPLETRMNT (76 aa)) the chain is Periplasmic. A helical membrane pass occupies residues 104–124 (FLGFLISWFPMLLLIGVWVFF). Topologically, residues 125–637 (MRQMHGGGKA…TKDKKENIIS (513 aa)) are cytoplasmic. 195-202 (GPPGTGKT) serves as a coordination point for ATP. Position 417 (histidine 417) interacts with Zn(2+). Residue glutamate 418 is part of the active site. Residues histidine 421 and aspartate 495 each contribute to the Zn(2+) site.

It in the central section; belongs to the AAA ATPase family. This sequence in the C-terminal section; belongs to the peptidase M41 family. In terms of assembly, homohexamer. The cofactor is Zn(2+).

Its subcellular location is the cell inner membrane. Acts as a processive, ATP-dependent zinc metallopeptidase for both cytoplasmic and membrane proteins. Plays a role in the quality control of integral membrane proteins. The chain is ATP-dependent zinc metalloprotease FtsH from Rickettsia prowazekii (strain Madrid E).